A 293-amino-acid polypeptide reads, in one-letter code: Nucleotide-binding protein CKR_3143 (293 aa).

Residue 8–15 (GLSGAGKT) participates in ATP binding. 59-62 (DIRG) contacts GTP.

The protein belongs to the RapZ-like family.

Functionally, displays ATPase and GTPase activities. The protein is Nucleotide-binding protein CKR_3143 of Clostridium kluyveri (strain NBRC 12016).